A 273-amino-acid polypeptide reads, in one-letter code: Formamidopyrimidine-DNA glycosylase (273 aa).

The active-site Schiff-base intermediate with DNA is Pro2. The active-site Proton donor is Glu3. The Proton donor; for beta-elimination activity role is filled by Lys58. His92, Arg111, and Lys153 together coordinate DNA. The FPG-type zinc-finger motif lies at 238–272 (KVYGREGQSCLSCSSTIIKIKHSGRSTFYCKTCQY). Catalysis depends on Arg262, which acts as the Proton donor; for delta-elimination activity.

Belongs to the FPG family. Monomer. It depends on Zn(2+) as a cofactor.

The catalysed reaction is Hydrolysis of DNA containing ring-opened 7-methylguanine residues, releasing 2,6-diamino-4-hydroxy-5-(N-methyl)formamidopyrimidine.. The enzyme catalyses 2'-deoxyribonucleotide-(2'-deoxyribose 5'-phosphate)-2'-deoxyribonucleotide-DNA = a 3'-end 2'-deoxyribonucleotide-(2,3-dehydro-2,3-deoxyribose 5'-phosphate)-DNA + a 5'-end 5'-phospho-2'-deoxyribonucleoside-DNA + H(+). Involved in base excision repair of DNA damaged by oxidation or by mutagenic agents. Acts as a DNA glycosylase that recognizes and removes damaged bases. Has a preference for oxidized purines, such as 7,8-dihydro-8-oxoguanine (8-oxoG). Has AP (apurinic/apyrimidinic) lyase activity and introduces nicks in the DNA strand. Cleaves the DNA backbone by beta-delta elimination to generate a single-strand break at the site of the removed base with both 3'- and 5'-phosphates. The chain is Formamidopyrimidine-DNA glycosylase from Rickettsia africae (strain ESF-5).